A 91-amino-acid polypeptide reads, in one-letter code: Small ribosomal subunit protein bS16 (91 aa).

This sequence belongs to the bacterial ribosomal protein bS16 family.

This chain is Small ribosomal subunit protein bS16, found in Limosilactobacillus reuteri (strain DSM 20016) (Lactobacillus reuteri).